The primary structure comprises 276 residues: Undecaprenyl-diphosphatase (276 aa).

6 helical membrane-spanning segments follow: residues 43 to 63, 85 to 105, 109 to 129, 183 to 203, 214 to 234, and 249 to 269; these read RAMAFNIIIQLAAILAVVWEF, GNLLLAFMPAVVLGVLFADLI, LFNPVTVAAALVVGGVIMLWA, AATEFSFFLAMPTMVGAAVYS, GDLPVFALGFVTSFIFAMIAV, and FAWYRIVFGLFILATWQFGWV.

This sequence belongs to the UppP family.

The protein localises to the cell inner membrane. The catalysed reaction is di-trans,octa-cis-undecaprenyl diphosphate + H2O = di-trans,octa-cis-undecaprenyl phosphate + phosphate + H(+). Functionally, catalyzes the dephosphorylation of undecaprenyl diphosphate (UPP). Confers resistance to bacitracin. This chain is Undecaprenyl-diphosphatase, found in Pseudomonas putida (strain ATCC 700007 / DSM 6899 / JCM 31910 / BCRC 17059 / LMG 24140 / F1).